Reading from the N-terminus, the 486-residue chain is Zinc finger chaperone ZPR1 (486 aa).

The segment at 1-31 is disordered; it reads MSEQKEDLFKPVGEAAAEVEDESIAEQNKAN. A Phosphoserine modification is found at serine 23. C4-type zinc fingers lie at residues 54–86 and 295–327; these read CMNC…CPHC and CPSC…CDHC. The residue at position 407 (threonine 407) is a Phosphothreonine.

Belongs to the ZPR1 family. Interacts with elongation factor 1-alpha.

It is found in the cytoplasm. It localises to the nucleus. Its function is as follows. Acts as a protein folding chaperone for elongation factor 1-alpha. The protein is Zinc finger chaperone ZPR1 of Saccharomyces cerevisiae (strain ATCC 204508 / S288c) (Baker's yeast).